Here is a 464-residue protein sequence, read N- to C-terminus: MNWNAILPEAILAIGILTVFILELFLERKHYKFLSVLAFIFVVLSGYSIFFVNYPAKLFFDGFSVDALNLIGKLFILAVTGFVLLSSYDYFSKKNSQYGELPYLYLIATLGLMVMISSDNLAIIFTGLELASITMYILVGLFRREYLSKEGAFKYLVIGTTGTSMYALGSALVYASSGSMVLSPVKEENTLFALGVILIISALALKVSAVPFHFWTPDAYEGAPTPTTAYLSTVPKIGMYFLFVKLTMYLFSAFPDWKYVVMLLAVLSMFYGNIVAYAQKSVKRLLAYSSIAHAGYFLTALTAVDKHLFSALLFYVFVYALATVGAFTVLAILEKKEGWTHHFLDFKGLKEENPVLASMLALFLFALIGIPPAAVFLGKLGIFFGLVKTDMFALGILFAIASLISAGYYLKVIVYMFLYSGEVRHGQTTVSAGEAFTVLGTAFLVIFFGLFPHVVLDFILRALS.

A run of 14 helical transmembrane segments spans residues 6 to 26 (ILPEAILAIGILTVFILELFL), 33 to 53 (FLSVLAFIFVVLSGYSIFFVN), 65 to 85 (VDALNLIGKLFILAVTGFVLL), 98 to 118 (YGELPYLYLIATLGLMVMISS), 122 to 142 (AIIFTGLELASITMYILVGLF), 155 to 175 (YLVIGTTGTSMYALGSALVYA), 192 to 212 (FALGVILIISALALKVSAVPF), 237 to 257 (IGMYFLFVKLTMYLFSAFPDW), 259 to 279 (YVVMLLAVLSMFYGNIVAYAQ), 285 to 305 (LLAYSSIAHAGYFLTALTAVD), 312 to 332 (LLFYVFVYALATVGAFTVLAI), 356 to 376 (LASMLALFLFALIGIPPAAVF), 401 to 421 (ASLISAGYYLKVIVYMFLYSG), and 436 to 456 (FTVLGTAFLVIFFGLFPHVVL).

Belongs to the complex I subunit 2 family. NDH-1 is composed of 14 different subunits. Subunits NuoA, H, J, K, L, M, N constitute the membrane sector of the complex.

Its subcellular location is the cell inner membrane. The enzyme catalyses a quinone + NADH + 5 H(+)(in) = a quinol + NAD(+) + 4 H(+)(out). Its function is as follows. NDH-1 shuttles electrons from NADH, via FMN and iron-sulfur (Fe-S) centers, to quinones in the respiratory chain. The immediate electron acceptor for the enzyme in this species is believed to be ubiquinone. Couples the redox reaction to proton translocation (for every two electrons transferred, four hydrogen ions are translocated across the cytoplasmic membrane), and thus conserves the redox energy in a proton gradient. The protein is NADH-quinone oxidoreductase subunit N 1 of Aquifex aeolicus (strain VF5).